The sequence spans 107 residues: U1-lycotoxin-Ls1c (107 aa).

The signal sequence occupies residues 1-20 (MMKVLVVVALLVTLISYSSS). Residues 21 to 41 (EGIDDLEADELLSLMANEQTR) constitute a propeptide that is removed on maturation. 4 disulfides stabilise this stretch: cysteine 44-cysteine 59, cysteine 51-cysteine 68, cysteine 58-cysteine 86, and cysteine 70-cysteine 84.

The protein belongs to the neurotoxin 19 (CSTX) family. 04 (U1-Lctx) subfamily. As to expression, expressed by the venom gland.

It localises to the secreted. The sequence is that of U1-lycotoxin-Ls1c from Lycosa singoriensis (Wolf spider).